A 167-amino-acid chain; its full sequence is CS6 fimbrial subunit B (167 aa).

A signal peptide spans 1–21 (MLKKIISAIALIAGTSGVVNA).

The protein resides in the fimbrium. The sequence is that of CS6 fimbrial subunit B (cssB) from Escherichia coli.